Consider the following 399-residue polypeptide: F-box protein At1g30790 (399 aa).

An F-box domain is found at Arg3–Phe49.

This Arabidopsis thaliana (Mouse-ear cress) protein is F-box protein At1g30790.